A 568-amino-acid chain; its full sequence is Malate synthase, glyoxysomal (568 aa).

Residues 1–20 (MGSLGMYSESGLTKKGSSRG) form a disordered region. Catalysis depends on R183, which acts as the Proton acceptor. D469 serves as the catalytic Proton donor. The Microbody targeting signal signature appears at 566–568 (SKL).

The protein belongs to the malate synthase family.

Its subcellular location is the glyoxysome. It carries out the reaction glyoxylate + acetyl-CoA + H2O = (S)-malate + CoA + H(+). It participates in carbohydrate metabolism; glyoxylate cycle; (S)-malate from isocitrate: step 2/2. This is Malate synthase, glyoxysomal from Cucumis sativus (Cucumber).